Here is a 44-residue protein sequence, read N- to C-terminus: Benzaldehyde dehydrogenase [NAD(+)] II (44 aa).

The protein belongs to the aldehyde dehydrogenase family.

It carries out the reaction benzaldehyde + NAD(+) + H2O = benzoate + NADH + 2 H(+). The chain is Benzaldehyde dehydrogenase [NAD(+)] II from Acinetobacter guillouiae (Acinetobacter genomosp. 11).